The following is a 399-amino-acid chain: A-type ATP synthase subunit C (399 aa).

Belongs to the V-ATPase V0D/AC39 subunit family. In terms of assembly, the A-type ATPase is composed of subunits A(3), B(3), C, D, E(1 or 2), F, H(2), I and K(x).

It localises to the cell membrane. Component of the A-type ATP synthase that produces ATP from ADP in the presence of a proton gradient across the membrane. This chain is A-type ATP synthase subunit C, found in Methanocaldococcus jannaschii (strain ATCC 43067 / DSM 2661 / JAL-1 / JCM 10045 / NBRC 100440) (Methanococcus jannaschii).